The following is a 1370-amino-acid chain: Putative surface protein SA2285 (1370 aa).

The N-terminal stretch at 1–50 (MRDKKGPVNKRVDFLSNKLNKYSIRKFTVGTASILIGSLMYLGTQQEAEA) is a signal peptide. 3 disordered regions span residues 77–116 (NKDT…EDTP), 439–472 (KFNP…NPLT), and 495–1344 (EYGP…TGLE). Basic and acidic residues-rich tracts occupy residues 96-116 (DTIE…EDTP), 450-460 (KVTREGQKGEK), 504-522 (GHRD…EEVP), 553-569 (SIVE…RKFN), 578-588 (KVTREGQKGEK), 605-618 (SKGE…KDPI), 632-650 (GHRD…EEVP), 681-697 (SIVE…RKFN), 706-716 (KVTREGQKGEK), 733-746 (SKGE…KDPI), 760-778 (GHRD…EEVP), 809-825 (SIVE…RKFN), 834-844 (KVTREGQKGEK), 861-874 (SKGE…KDPI), 888-906 (GHRD…EEVP), 937-953 (SIVE…RKFN), 962-972 (KVTREGQKGEK), 989-1002 (SKGE…KDPI), 1016-1034 (GHRD…EEVP), 1065-1081 (SIVE…RKFN), 1090-1100 (KVTREGQKGEK), 1117-1130 (SKGE…KDPV), 1174-1185 (KVIEEPVDDVIK), and 1202-1221 (FETK…RVKQ). Positions 418–500 (SAKNNNRIRK…NELTEYGPET (83 aa)) constitute a G5 1 domain. In terms of domain architecture, G5 2 spans 546–628 (YGPVKGDSIV…NELTEYGPET (83 aa)). The region spanning 674 to 756 (YGPVKGDSIV…NELTEYGPET (83 aa)) is the G5 3 domain. The G5 4 domain maps to 802-884 (YGPVKGDSIV…NELTEYGPET (83 aa)). One can recognise a G5 5 domain in the interval 930-1012 (YGPVKGDSIV…NELTEYGPET (83 aa)). The G5 6 domain maps to 1058–1140 (YGPVKGDSIV…NELTEFGGEK (83 aa)). The 83-residue stretch at 1186–1268 (HGPKTGTPET…DKIVEFGGEK (83 aa)) folds into the G5 7 domain. A compositionally biased stretch (polar residues) spans 1224 to 1238 (QPGSKTITTPITVNP). Over residues 1252–1282 (EITKQPVDKIVEFGGEKPKDPKGPENPEKPS) the composition is skewed to basic and acidic residues. The LPXTG sorting signal motif lies at 1338–1342 (LPKTG). Thr-1341 bears the Pentaglycyl murein peptidoglycan amidated threonine mark. The propeptide at 1342–1370 (GLESTQKGLIFSSIIGIAGLMLLARRRKN) is removed by sortase.

It localises to the secreted. The protein localises to the cell wall. This is Putative surface protein SA2285 from Staphylococcus aureus (strain N315).